Here is a 332-residue protein sequence, read N- to C-terminus: MSVVKSIELVLPKDAVYLAGCIIEGQVVLTLNSTLVDPIVKVELVGRGYVEWNEETGASRDYSREVICNNKADYVHKTKTFPVEDNWLSAGSHTFDFHFNLPPRLPSTFTSKIGNIFYFVQASCMGREHILAKKKIYLMVQGTSSIFHSEKSLQNPLFVEAEKKVSYNCCSQGTICLQIQMEKNTFTPGERDIFTTEINNQTSKCIKTVIFALYAHVHYEGFTPNAERRSRVDSSELLRQEANTHITAFNTTKIVSTFHLPPVLSVSGSGSQDSEIMNTQYELVSTVHLPWTLTSVKAKVPIIITSNPVDSNQTAAGCRTRAPLPVSPDQQN.

A disordered region spans residues 311–332; it reads SNQTAAGCRTRAPLPVSPDQQN.

This sequence belongs to the arrestin family.

Its subcellular location is the membrane. Functionally, plays an essential role in spermatogenesis. May be involved in the anchoring of the sperm head to the tail during spermatogenesis by affecting SEC22A-mediated SUN5 and NDC1 transport and localization. This chain is Arrestin domain-containing protein 5 (ARRDC5), found in Bos taurus (Bovine).